The sequence spans 265 residues: Orotidine 5'-phosphate decarboxylase (265 aa).

Substrate contacts are provided by residues Asp-37, 59–61 (KTH), 91–100 (DRKFADIGNT), Tyr-217, and Arg-236. The active-site Proton donor is the Lys-93.

The protein belongs to the OMP decarboxylase family.

It carries out the reaction orotidine 5'-phosphate + H(+) = UMP + CO2. Its pathway is pyrimidine metabolism; UMP biosynthesis via de novo pathway; UMP from orotate: step 2/2. The sequence is that of Orotidine 5'-phosphate decarboxylase (URA3) from Saccharomycopsis fibuligera (Yeast).